Reading from the N-terminus, the 422-residue chain is UDP-N-acetylglucosamine 1-carboxyvinyltransferase (422 aa).

22 to 23 lines the phosphoenolpyruvate pocket; sequence KN. UDP-N-acetyl-alpha-D-glucosamine is bound at residue Arg94. The active-site Proton donor is Cys118. The residue at position 118 (Cys118) is a 2-(S-cysteinyl)pyruvic acid O-phosphothioketal. UDP-N-acetyl-alpha-D-glucosamine contacts are provided by residues 123–127, Asp308, and Ile330; that span reads RPVDL.

It belongs to the EPSP synthase family. MurA subfamily.

The protein localises to the cytoplasm. The enzyme catalyses phosphoenolpyruvate + UDP-N-acetyl-alpha-D-glucosamine = UDP-N-acetyl-3-O-(1-carboxyvinyl)-alpha-D-glucosamine + phosphate. It participates in cell wall biogenesis; peptidoglycan biosynthesis. Functionally, cell wall formation. Adds enolpyruvyl to UDP-N-acetylglucosamine. This chain is UDP-N-acetylglucosamine 1-carboxyvinyltransferase, found in Dinoroseobacter shibae (strain DSM 16493 / NCIMB 14021 / DFL 12).